We begin with the raw amino-acid sequence, 267 residues long: Methyl-coenzyme M reductase II subunit gamma (267 aa).

Arg-123 provides a ligand contact to coenzyme M.

The protein belongs to the methyl-coenzyme M reductase gamma subunit family. As to quaternary structure, MCR is a hexamer of two alpha, two beta, and two gamma chains, forming a dimer of heterotrimers. Coenzyme F430 is required as a cofactor.

It carries out the reaction coenzyme B + methyl-coenzyme M = methane + coenzyme M-coenzyme B heterodisulfide. It participates in one-carbon metabolism; methyl-coenzyme M reduction; methane from methyl-coenzyme M: step 1/1. Component of the methyl-coenzyme M reductase (MCR) I that catalyzes the reductive cleavage of methyl-coenzyme M (CoM-S-CH3 or 2-(methylthio)ethanesulfonate) using coenzyme B (CoB or 7-mercaptoheptanoylthreonine phosphate) as reductant which results in the production of methane and the mixed heterodisulfide of CoB and CoM (CoM-S-S-CoB). This is the final step in methanogenesis. This is Methyl-coenzyme M reductase II subunit gamma (mrtG) from Methanothermus fervidus (strain ATCC 43054 / DSM 2088 / JCM 10308 / V24 S).